Reading from the N-terminus, the 123-residue chain is Small ribosomal subunit protein uS13 (123 aa).

The segment at 93 to 123 is disordered; it reads HRKGLPVRGQNTKNNARTRKGPAKAIAGKKK. Positions 108–123 are enriched in basic residues; sequence ARTRKGPAKAIAGKKK.

Belongs to the universal ribosomal protein uS13 family. In terms of assembly, part of the 30S ribosomal subunit. Forms a loose heterodimer with protein S19. Forms two bridges to the 50S subunit in the 70S ribosome.

In terms of biological role, located at the top of the head of the 30S subunit, it contacts several helices of the 16S rRNA. In the 70S ribosome it contacts the 23S rRNA (bridge B1a) and protein L5 of the 50S subunit (bridge B1b), connecting the 2 subunits; these bridges are implicated in subunit movement. Contacts the tRNAs in the A and P-sites. This chain is Small ribosomal subunit protein uS13, found in Leuconostoc citreum (strain KM20).